A 223-amino-acid polypeptide reads, in one-letter code: Uracil phosphoribosyltransferase (223 aa).

Residues R86, R111, and 145–153 (DPILATGST) each bind 5-phospho-alpha-D-ribose 1-diphosphate. Residues I209 and 214–216 (GDA) contribute to the uracil site. Residue D215 coordinates 5-phospho-alpha-D-ribose 1-diphosphate.

Belongs to the UPRTase family. It depends on Mg(2+) as a cofactor.

The enzyme catalyses UMP + diphosphate = 5-phospho-alpha-D-ribose 1-diphosphate + uracil. The protein operates within pyrimidine metabolism; UMP biosynthesis via salvage pathway; UMP from uracil: step 1/1. With respect to regulation, allosterically activated by GTP. In terms of biological role, catalyzes the conversion of uracil and 5-phospho-alpha-D-ribose 1-diphosphate (PRPP) to UMP and diphosphate. In Natronomonas pharaonis (strain ATCC 35678 / DSM 2160 / CIP 103997 / JCM 8858 / NBRC 14720 / NCIMB 2260 / Gabara) (Halobacterium pharaonis), this protein is Uracil phosphoribosyltransferase.